Reading from the N-terminus, the 344-residue chain is Arginine N-succinyltransferase (344 aa).

Leu125 contacts succinyl-CoA. The Proton donor role is filled by His229.

The protein belongs to the arginine N-succinyltransferase family.

The enzyme catalyses succinyl-CoA + L-arginine = N(2)-succinyl-L-arginine + CoA + H(+). The protein operates within amino-acid degradation; L-arginine degradation via AST pathway; L-glutamate and succinate from L-arginine: step 1/5. Catalyzes the transfer of succinyl-CoA to arginine to produce N(2)-succinylarginine. The sequence is that of Arginine N-succinyltransferase from Escherichia coli O127:H6 (strain E2348/69 / EPEC).